The sequence spans 110 residues: Protein C-ets-2 (110 aa).

A DNA-binding region (ETS) is located at residues 1 to 84 (SGPIQLWQFL…AGKRYVYRFV (84 aa)).

It belongs to the ETS family.

Its subcellular location is the nucleus. Probable transcription factor. The protein is Protein C-ets-2 (ETS-2) of Lytechinus variegatus (Green sea urchin).